The sequence spans 292 residues: Putative sugar lactone lactonase YvrE (292 aa).

A divalent metal cation is bound by residues E15, N146, and D196.

This sequence belongs to the SMP-30/CGR1 family. It depends on a divalent metal cation as a cofactor.

Its subcellular location is the cytoplasm. The sequence is that of Putative sugar lactone lactonase YvrE (yvrE) from Bacillus subtilis (strain 168).